The chain runs to 239 residues: Mannose-binding protein A (239 aa).

Residues 1–18 form the signal peptide; the sequence is MLLLPLLPVLLCVVSVSS. A disordered region spans residues 35-88; that stretch reads ACGRDGRDGPKGEKGEPGQGLRGLQGPPGKLGPPGSVGSPGSPGPKGQKGDHGD. The Collagen-like domain maps to 37-89; the sequence is GRDGRDGPKGEKGEPGQGLRGLQGPPGKLGPPGSVGSPGSPGPKGQKGDHGDN. The span at 38–50 shows a compositional bias: basic and acidic residues; sequence RDGRDGPKGEKGE. 4-hydroxyproline is present on P44. K45 and K48 each carry 5-hydroxylysine. Residues K45 and K48 are each glycosylated (O-linked (Gal...) hydroxylysine). P51, P62, P68, P74, and P79 each carry 4-hydroxyproline. Positions 58-74 are enriched in low complexity; sequence LQGPPGKLGPPGSVGSP. 2 positions are modified to 5-hydroxylysine: K80 and K83. O-linked (Gal...) hydroxylysine glycosylation is found at K80 and K83. One can recognise a C-type lectin domain in the interval 144–239; sequence SLCTELQGTV…SFKAVCEFPA (96 aa). Intrachain disulfides connect C146/C235 and C213/C227. The Ca(2+) site is built by D179, E183, E203, N205, E211, D212, N223, and D224. The tract at residues 203–211 is calcium-dependent carbohydrate binding; it reads EPNNHGSGE.

In terms of assembly, homotrimer. Forms higher oligomeric complexes formed by the association of two, three or more homotrimers. Oligomerization occurs in the endoplasmic reticulum. Interacts with MASP1 and MASP2. Post-translationally, hydroxylated on lysine and proline residues within the collagen-like domain. In terms of processing, O-glycosylated. O-linked glycans on hydroxylysine residues consist of Glc-Gal disaccharides bound to the oxygen atom of post-translationally added hydroxyl groups. In terms of tissue distribution, detected in liver and blood serum (at protein level). Detected in liver.

It localises to the secreted. Functionally, calcium-dependent lectin. Plays a role in the innate immune response by binding mannose, fucose and N-acetylglucosamine moieties on different microorganisms and mediating activation of the lectin complement pathway. Binds to late apoptotic cells, as well as to apoptotic blebs and to necrotic cells, but not to early apoptotic cells, facilitating their uptake by macrophages. The polypeptide is Mannose-binding protein A (Mbl1) (Mus musculus (Mouse)).